A 245-amino-acid chain; its full sequence is 1-(5-phosphoribosyl)-5-[(5-phosphoribosylamino)methylideneamino] imidazole-4-carboxamide isomerase (245 aa).

Asp8 functions as the Proton acceptor in the catalytic mechanism. The active-site Proton donor is the Asp131.

The protein belongs to the HisA/HisF family.

Its subcellular location is the cytoplasm. The enzyme catalyses 1-(5-phospho-beta-D-ribosyl)-5-[(5-phospho-beta-D-ribosylamino)methylideneamino]imidazole-4-carboxamide = 5-[(5-phospho-1-deoxy-D-ribulos-1-ylimino)methylamino]-1-(5-phospho-beta-D-ribosyl)imidazole-4-carboxamide. It participates in amino-acid biosynthesis; L-histidine biosynthesis; L-histidine from 5-phospho-alpha-D-ribose 1-diphosphate: step 4/9. This is 1-(5-phosphoribosyl)-5-[(5-phosphoribosylamino)methylideneamino] imidazole-4-carboxamide isomerase from Neisseria gonorrhoeae (strain NCCP11945).